The following is a 262-amino-acid chain: Acyl-[acyl-carrier-protein]--UDP-N-acetylglucosamine O-acyltransferase (262 aa).

This sequence belongs to the transferase hexapeptide repeat family. LpxA subfamily. Homotrimer.

Its subcellular location is the cytoplasm. The enzyme catalyses a (3R)-hydroxyacyl-[ACP] + UDP-N-acetyl-alpha-D-glucosamine = a UDP-3-O-[(3R)-3-hydroxyacyl]-N-acetyl-alpha-D-glucosamine + holo-[ACP]. It functions in the pathway glycolipid biosynthesis; lipid IV(A) biosynthesis; lipid IV(A) from (3R)-3-hydroxytetradecanoyl-[acyl-carrier-protein] and UDP-N-acetyl-alpha-D-glucosamine: step 1/6. In terms of biological role, involved in the biosynthesis of lipid A, a phosphorylated glycolipid that anchors the lipopolysaccharide to the outer membrane of the cell. This is Acyl-[acyl-carrier-protein]--UDP-N-acetylglucosamine O-acyltransferase from Erwinia tasmaniensis (strain DSM 17950 / CFBP 7177 / CIP 109463 / NCPPB 4357 / Et1/99).